The following is a 1128-amino-acid chain: Nck-associated protein 1 (1128 aa).

The interval 640-665 (AVNKKSKKQTGKKGEPEREKPGVESM) is disordered. Residues 651–665 (KKGEPEREKPGVESM) are compositionally biased toward basic and acidic residues. A helical membrane pass occupies residues 995–1015 (IACLLMVFVAVSLPTLASNVM).

It belongs to the HEM-1/HEM-2 family.

The protein localises to the cell membrane. It is found in the cell projection. It localises to the lamellipodium membrane. Part of the WAVE complex that regulates lamellipodia formation. The WAVE complex regulates actin filament reorganization via its interaction with the Arp2/3 complex. Actin remodeling activity is regulated by RAC1. Plays a role in neural tube closure. The sequence is that of Nck-associated protein 1 (nckap1) from Xenopus laevis (African clawed frog).